A 183-amino-acid polypeptide reads, in one-letter code: Negative modulator of initiation of replication (183 aa).

Positions 118–122 are interaction with DNA; it reads RTRIY.

Belongs to the SeqA family. As to quaternary structure, homodimer. Polymerizes to form helical filaments.

It localises to the cytoplasm. Negative regulator of replication initiation, which contributes to regulation of DNA replication and ensures that replication initiation occurs exactly once per chromosome per cell cycle. Binds to pairs of hemimethylated GATC sequences in the oriC region, thus preventing assembly of replication proteins and re-initiation at newly replicated origins. Repression is relieved when the region becomes fully methylated. The sequence is that of Negative modulator of initiation of replication from Proteus mirabilis (strain HI4320).